Here is a 254-residue protein sequence, read N- to C-terminus: Urease accessory protein UreF (254 aa).

A compositionally biased stretch (basic and acidic residues) spans 1–11 (MDKGKSVKSTE). A disordered region spans residues 1-25 (MDKGKSVKSTEKSVGIPPKTPKTDN).

Belongs to the UreF family. As to quaternary structure, ureH, UreF and UreG form a complex that acts as a GTP-hydrolysis-dependent molecular chaperone, activating the urease apoprotein by helping to assemble the nickel containing metallocenter of UreC. The UreE protein probably delivers the nickel.

It localises to the cytoplasm. Its function is as follows. Required for maturation of urease via the functional incorporation of the urease nickel metallocenter. The protein is Urease accessory protein UreF of Helicobacter pylori (strain P12).